The sequence spans 173 residues: Zinc finger matrin-type protein 5 (173 aa).

The C3H1-type zinc finger occupies 51-79 (ERSKEVCRKFVQTGQCVFGTSCRFSHMSE). Residues 83–111 (KMLEQKIDDEKRQKEDPDQDGSSERSVDE) form a disordered region.

Component of the U11/U12 snRNPs that are part of the U12-type spliceosome.

The protein resides in the nucleus. The protein is Zinc finger matrin-type protein 5 (zmat5) of Danio rerio (Zebrafish).